The primary structure comprises 133 residues: Heat shock protein 15 (133 aa).

The S4 RNA-binding domain maps to 9–71 (VRLDKWLWAA…DERTVIVKAI (63 aa)). Positions 105-133 (NALTMPHPDRRPDKKERRDLLRFKHGDSE) are disordered. Residues 111–133 (HPDRRPDKKERRDLLRFKHGDSE) are compositionally biased toward basic and acidic residues.

It belongs to the HSP15 family. Monomer.

Involved in the recycling of free 50S ribosomal subunits that still carry a nascent chain. Binds RNA more specifically than DNA. Binds with very high affinity to the free 50S ribosomal subunit. Does not bind it when it is part of the 70S ribosome. The protein is Heat shock protein 15 (hslR) of Escherichia coli O157:H7.